We begin with the raw amino-acid sequence, 1196 residues long: MPPKKFKDLNSFLDDQPKDPNLVASPFGGYFKNPAADAGSNNASKKSSYQQQRNWKQGGNYQQGGYQSYNSNYNNYNNYNNYNNYNNYNNYNKYNGQGYQKSTYKQSAVTPNQSGTPTPSASTTSLTSLNEKLSNLELTPISQFLSKIPECQSITDCKNQIKLIIEEFGKEGNSTGEKIEEWKIVDVLSKFIKPKNPSLVRESAMLIISNIAQFFSGKPPQEAYLLPFFNVALDCISDKENTVKRAAQHAIDSLLNCFPMEALTCFVLPTILDYLSSGAKWQAKMAALSVVDRIREDSANDLLELTFKDAVPVLTDVATDFKPELAKQGYKTLLDYVSILDNLDLSPRYKLIVDTLQDPSKVPESVKSLSSVTFVAEVTEPSLSLLVPILNRSLNLSSSSQEQLRQTVIVVENLTRLVNNRNEIESFIPLLLPGIQKVVDTASLPEVRELAEKALNVLKEDDEADKENKFSGRLTLEEGRDFLLDHLKDIKADDSCFVKPYMNDETVIKYMSKILTVDSNVNDWKRLEDFLTAVFGGSDSQREFVKQDFIHNLRALFYQEKERADEDEGIEIVNTDFSLAYGSRMLLNKTNLRLLKGHRYGLCGRNGAGKSTLMRAIANGQLDGFPDKDTLRTCFVEHKLQGEEGDLDLVSFIALDEELQSTSREEIAAALESVGFDEERRAQTVGSLSGGWKMKLELARAMLQKADILLLDEPTNHLDVSNVKWLEEYLLEHTDITSLIVSHDSGFLDTVCTDIIHYENKKLAYYKGNLAAFVEQKPEAKSYYTLTDSNAQMRFPPPGILTGVKSNTRAVAKMTDVTFSYPGAQKPSLSHVSCSLSLSSRVACLGPNGAGKSTLIKLLTGELVPNEGKVEKHPNLRIGYIAQHALQHVNEHKEKTANQYLQWRYQFGDDREVLLKESRKISEDEKEMMTKEIDIDDGRGKRAIEAIVGRQKLKKSFQYEVKWKYWKPKYNSWVPKDVLVEHGFEKLVQKFDDHEASREGLGYRELIPSVITKHFEDVGLDSEIANHTPLGSLSGGQLVKVVIAGAMWNNPHLLVLDEPTNYLDRDSLGALAVAIRDWSGGVVMISHNNEFVGALCPEQWIVENGKMVQKGSAQVDQSKFEDGGNADAVGLKASNLAKPSVDDDDSPANIKVKQRKKRLTRNEKKLQAERRRLRYIEWLSSPKGTPKPVDTDDEED.

2 disordered regions span residues 1 to 49 (MPPK…KSSY) and 103 to 125 (TYKQ…STTS). 2 stretches are compositionally biased toward polar residues: residues 39–49 (GSNNASKKSSY) and 103–113 (TYKQSAVTPNQ). Positions 114 to 125 (SGTPTPSASTTS) are enriched in low complexity. Residue Ser-443 is modified to Phosphoserine. 2 ABC transporter domains span residues 570 to 786 (IEIV…YYTL) and 812 to 1129 (AKMT…ADAV). Residues 604-611 (GRNGAGKS) and 846-853 (GPNGAGKS) contribute to the ATP site. One can recognise a Chromo domain in the interval 942–1003 (RAIEAIVGRQ…HEASREGLGY (62 aa)). 2 disordered regions span residues 1137–1166 (AKPS…EKKL) and 1177–1196 (EWLS…DEED). Residue Thr-1191 is modified to Phosphothreonine.

Belongs to the ABC transporter superfamily. ABCF family. EF3 subfamily.

The protein resides in the cytoplasm. It is found in the nucleus. Its function is as follows. May be involved in the mRNA export process. Forms the [NU+] prion and induces [PSI+] prion formation. This Saccharomyces cerevisiae (strain ATCC 204508 / S288c) (Baker's yeast) protein is [NU+] prion formation protein 1 (NEW1).